The chain runs to 395 residues: Ribonuclease D (395 aa).

Residues 14–181 enclose the 3'-5' exonuclease domain; it reads LITKSEDLAA…VYETLRDRLE (168 aa). One can recognise an HRDC domain in the interval 219-300; it reads NRRYLGLLRA…AEARGLPDAD (82 aa).

Belongs to the RNase D family. The cofactor is a divalent metal cation.

The protein localises to the cytoplasm. The catalysed reaction is Exonucleolytic cleavage that removes extra residues from the 3'-terminus of tRNA to produce 5'-mononucleotides.. Its function is as follows. Exonuclease involved in the 3' processing of various precursor tRNAs. Initiates hydrolysis at the 3'-terminus of an RNA molecule and releases 5'-mononucleotides. This Granulibacter bethesdensis (strain ATCC BAA-1260 / CGDNIH1) protein is Ribonuclease D.